The sequence spans 549 residues: Lipase 1 (549 aa).

The N-terminal stretch at 1-15 (MELALALSLIASVAA) is a signal peptide. A disulfide bridge links C75 with C112. The Acyl-ester intermediate role is filled by S224. A disulfide bridge links C283 with C292. N-linked (GlcNAc...) asparagine glycosylation occurs at N329. The active-site Charge relay system is the E356. N366 is a glycosylation site (N-linked (GlcNAc...) asparagine). The Charge relay system role is filled by H464.

Belongs to the type-B carboxylesterase/lipase family.

It catalyses the reaction a triacylglycerol + H2O = a diacylglycerol + a fatty acid + H(+). This is Lipase 1 (LIP1) from Diutina rugosa (Yeast).